Reading from the N-terminus, the 276-residue chain is Glutamate 5-kinase (276 aa).

An ATP-binding site is contributed by lysine 14. Positions 54, 141, and 157 each coordinate substrate. Residues 177–178 (SD) and 219–225 (TGGMLTK) contribute to the ATP site.

This sequence belongs to the glutamate 5-kinase family.

The protein localises to the cytoplasm. The catalysed reaction is L-glutamate + ATP = L-glutamyl 5-phosphate + ADP. The protein operates within amino-acid biosynthesis; L-proline biosynthesis; L-glutamate 5-semialdehyde from L-glutamate: step 1/2. Functionally, catalyzes the transfer of a phosphate group to glutamate to form L-glutamate 5-phosphate. This Listeria monocytogenes serotype 4a (strain HCC23) protein is Glutamate 5-kinase.